Consider the following 380-residue polypeptide: Outer mitochondrial transmembrane helix translocase (380 aa).

Topologically, residues 1–18 (MLSDIPRDALLRPLTRNE) are mitochondrial intermembrane. A helical transmembrane segment spans residues 19 to 37 (VVGMLVRLTVFGAATYYSI). Residues 38-380 (KWVVDALDPT…PANLREVPLD (343 aa)) are Cytoplasmic-facing. 136 to 143 (GPPGCGKT) serves as a coordination point for ATP.

Belongs to the AAA ATPase family. MSP1 subfamily.

The protein localises to the mitochondrion outer membrane. The protein resides in the peroxisome membrane. It localises to the postsynaptic cell membrane. It catalyses the reaction [protein]-with a C-terminal TM segment(out) + ATP + H2O = [protein]-with a C-terminal TM segment(in) + ADP + phosphate + H(+). Outer mitochondrial translocase required to remove mislocalized tail-anchored transmembrane proteins on mitochondria. Specifically recognizes and binds tail-anchored transmembrane proteins: acts as a dislocase that mediates the ATP-dependent extraction of mistargeted tail-anchored transmembrane proteins from the mitochondrion outer membrane. Also plays a critical role in regulating the surface expression of AMPA receptors (AMPAR), thereby regulating synaptic plasticity and learning and memory. In Danio rerio (Zebrafish), this protein is Outer mitochondrial transmembrane helix translocase.